A 167-amino-acid polypeptide reads, in one-letter code: Claudin domain-containing protein 2 (167 aa).

Helical transmembrane passes span 7-27 (LQSGGILLSLVANVLMVLSTA), 59-79 (LAVTVACMVLAVGVGVVGMVM), 96-116 (TSAFLFLGGLLLLTALIGYTV), and 134-154 (WLALPFSILAGFCFLLADMIM).

Belongs to the PMP-22/EMP/MP20 family.

It localises to the membrane. The chain is Claudin domain-containing protein 2 (CLDND2) from Homo sapiens (Human).